Reading from the N-terminus, the 84-residue chain is Subtilisin-chymotrypsin inhibitor WSCI (84 aa).

The signal sequence occupies residues 1–12 (MSSVVKKPLGGN). Residues 1-28 (MSSVVKKPLGGNTDTGDHHNQKTEWPEL) are disordered. Over residues 15–25 (TGDHHNQKTEW) the composition is skewed to basic and acidic residues.

Monomer.

The protein localises to the secreted. Functionally, inhibits B.lichenoformis subtilisin, B.subtilis subtilisin, bovine pancreatic alpha-chymotrypsin and porcine alpha-chymotrypsin with Ki of 3.92 nM, 5.70 nM, 7.24 nM and 9.35 nM respectively. B.lichenoformis subtilisin is inhibited with a molar ratio of 1:0.87. Also inhibits chymotrypsin-like activities from the digestive tracts of the insect larvae T.molitor, P.interpunctella and H.armigera. Does not inhibit bovine pancreatic trypsin, porcine pancreatic elastase, or human leukocyte elastase. The polypeptide is Subtilisin-chymotrypsin inhibitor WSCI (Triticum aestivum (Wheat)).